We begin with the raw amino-acid sequence, 318 residues long: METVPKKRDAPVLTAGKGISWMAALKRDKWLYLLLIPGLLYFLIFKYLPMWGVLIAFKDYSPYLGFWKSEWVGFDYFKDFFMNPDFFRLLRNTLMLASLDLLFAFPAPLILALLLNEVRKAVYKRCIQTFIYVPHFVSWTIVVSITFVFFTVDTGVINKLIMSLTGEQISFLSDADWFRPMIVMQSIWKETGWGTILFLAALATVDQEQYEAAIMDGAGRFRRMWHITLPAIRSTIIVLLILRIGSFLNLGFEQVYLMTNSLNRSVADIFDTYVYMMGITQGAYSYSTAVGLFKSVVGIILIFGANYIAKKFDQEGLF.

6 consecutive transmembrane segments (helical) span residues 35-55, 94-114, 130-150, 182-202, 236-256, and 289-309; these read LIPG…GVLI, LMLA…LALL, FIYV…FVFF, IVMQ…LAAL, IIVL…EQVY, and AVGL…NYIA. The 216-residue stretch at 90–305 folds into the ABC transmembrane type-1 domain; it reads LRNTLMLASL…VVGIILIFGA (216 aa).

It belongs to the binding-protein-dependent transport system permease family. MalFG subfamily.

The protein localises to the cell membrane. This is Protein LplB (lplB) from Bacillus subtilis (strain 168).